The primary structure comprises 229 residues: Putative N-acetylmannosamine-6-phosphate 2-epimerase 2 (229 aa).

It belongs to the NanE family.

The catalysed reaction is an N-acyl-D-glucosamine 6-phosphate = an N-acyl-D-mannosamine 6-phosphate. Its pathway is amino-sugar metabolism; N-acetylneuraminate degradation; D-fructose 6-phosphate from N-acetylneuraminate: step 3/5. Converts N-acetylmannosamine-6-phosphate (ManNAc-6-P) to N-acetylglucosamine-6-phosphate (GlcNAc-6-P). The chain is Putative N-acetylmannosamine-6-phosphate 2-epimerase 2 from Salmonella paratyphi A (strain ATCC 9150 / SARB42).